A 302-amino-acid polypeptide reads, in one-letter code: Orotidine 5'-phosphate decarboxylase (302 aa).

Catalysis depends on K105, which acts as the Proton donor.

The protein belongs to the OMP decarboxylase family. Type 2 subfamily.

It catalyses the reaction orotidine 5'-phosphate + H(+) = UMP + CO2. It functions in the pathway pyrimidine metabolism; UMP biosynthesis via de novo pathway; UMP from orotate: step 2/2. The polypeptide is Orotidine 5'-phosphate decarboxylase (Rhodopirellula baltica (strain DSM 10527 / NCIMB 13988 / SH1)).